The chain runs to 146 residues: Large ribosomal subunit protein uL15 (146 aa).

A compositionally biased stretch (basic and acidic residues) spans methionine 1–arginine 13. The interval methionine 1–glycine 52 is disordered. Gly residues-rich tracts occupy residues arginine 21 to alanine 31 and serine 42 to glycine 52.

This sequence belongs to the universal ribosomal protein uL15 family. Part of the 50S ribosomal subunit.

In terms of biological role, binds to the 23S rRNA. In Bacillus cereus (strain B4264), this protein is Large ribosomal subunit protein uL15.